A 154-amino-acid chain; its full sequence is Superoxide dismutase [Cu-Zn] (154 aa).

Cu cation is bound by residues His47, His49, and His64. A disulfide bridge links Cys58 with Cys147. 4 residues coordinate Zn(2+): His64, His72, His81, and Asp84. His121 contacts Cu cation. A disordered region spans residues 122-143 (GGTDDLGKGGNEESLKTGNAGP). Positions 123–136 (GTDDLGKGGNEESL) are enriched in basic and acidic residues. Arg144 lines the substrate pocket.

This sequence belongs to the Cu-Zn superoxide dismutase family. In terms of assembly, homodimer. It depends on Cu cation as a cofactor. Requires Zn(2+) as cofactor.

It localises to the cytoplasm. The enzyme catalyses 2 superoxide + 2 H(+) = H2O2 + O2. Its function is as follows. Destroys radicals which are normally produced within the cells and which are toxic to biological systems. The polypeptide is Superoxide dismutase [Cu-Zn] (SOD1) (Cordyceps militaris (Caterpillar fungus)).